The primary structure comprises 359 residues: 5-formaminoimidazole-4-carboxamide-1-(beta)-D-ribofuranosyl 5'-monophosphate synthetase (359 aa).

5-amino-1-(5-phospho-beta-D-ribosyl)imidazole-4-carboxamide-binding residues include histidine 28 and serine 95. Positions 115 to 346 (ELMIWETDRD…MGRRIAREIK (232 aa)) constitute an ATP-grasp domain. ATP is bound by residues 144–206 (PEEI…ANIY) and glutamate 228. Asparagine 256 lines the 5-amino-1-(5-phospho-beta-D-ribosyl)imidazole-4-carboxamide pocket. Mg(2+) contacts are provided by glutamate 295 and glutamate 308.

It belongs to the phosphohexose mutase family. The cofactor is Mg(2+). Mn(2+) is required as a cofactor.

It catalyses the reaction 5-amino-1-(5-phospho-beta-D-ribosyl)imidazole-4-carboxamide + formate + ATP = 5-formamido-1-(5-phospho-D-ribosyl)imidazole-4-carboxamide + ADP + phosphate. Its pathway is purine metabolism; IMP biosynthesis via de novo pathway; 5-formamido-1-(5-phospho-D-ribosyl)imidazole-4-carboxamide from 5-amino-1-(5-phospho-D-ribosyl)imidazole-4-carboxamide (formate route): step 1/1. Catalyzes the ATP- and formate-dependent formylation of 5-aminoimidazole-4-carboxamide-1-beta-d-ribofuranosyl 5'-monophosphate (AICAR) to 5-formaminoimidazole-4-carboxamide-1-beta-d-ribofuranosyl 5'-monophosphate (FAICAR) in the absence of folates. The polypeptide is 5-formaminoimidazole-4-carboxamide-1-(beta)-D-ribofuranosyl 5'-monophosphate synthetase (Archaeoglobus fulgidus (strain ATCC 49558 / DSM 4304 / JCM 9628 / NBRC 100126 / VC-16)).